The following is a 92-amino-acid chain: Transcription factor PRE1 (92 aa).

Residues Arg4–Leu59 form the bHLH domain.

As to quaternary structure, interacts with IBH1 and HFR1. As to expression, expressed in roots, leaves, stems and flowers.

The protein localises to the nucleus. In terms of biological role, atypical and probable non DNA-binding bHLH transcription factor that integrates multiple signaling pathways to regulate cell elongation and plant development. Binds IBH1, forming a pair of antagonistic bHLH transcription factors that function downstream of BZR1 to mediate brassinosteroid regulation of cell elongation. Regulates light responses by binding and inhibiting the activity of the bHLH transcription factor HFR1, a critical regulator of light signaling and shade avoidance. May have a regulatory role in various aspects of gibberellin-dependent growth and development. The polypeptide is Transcription factor PRE1 (PRE1) (Arabidopsis thaliana (Mouse-ear cress)).